A 351-amino-acid chain; its full sequence is Hydroxymethylglutaryl-CoA synthase (351 aa).

Asp-28 is a binding site for (3S)-3-hydroxy-3-methylglutaryl-CoA. Glu-80 (proton donor/acceptor) is an active-site residue. 2 residues coordinate (3S)-3-hydroxy-3-methylglutaryl-CoA: Cys-112 and Thr-153. Cys-112 serves as the catalytic Acyl-thioester intermediate. CoA is bound at residue Arg-199. The (3S)-3-hydroxy-3-methylglutaryl-CoA site is built by Thr-201 and His-234. His-234 functions as the Proton donor/acceptor in the catalytic mechanism. CoA is bound at residue Lys-239. 3 residues coordinate (3S)-3-hydroxy-3-methylglutaryl-CoA: Arg-243, Asn-266, and Ser-296.

This sequence belongs to the thiolase-like superfamily. Archaeal HMG-CoA synthase family. In terms of assembly, interacts with acetoacetyl-CoA thiolase that catalyzes the precedent step in the pathway and with a DUF35 protein. The acetoacetyl-CoA thiolase/HMG-CoA synthase complex channels the intermediate via a fused CoA-binding site, which allows for efficient coupling of the endergonic thiolase reaction with the exergonic HMGCS reaction.

It catalyses the reaction acetoacetyl-CoA + acetyl-CoA + H2O = (3S)-3-hydroxy-3-methylglutaryl-CoA + CoA + H(+). Its pathway is metabolic intermediate biosynthesis; (R)-mevalonate biosynthesis; (R)-mevalonate from acetyl-CoA: step 2/3. Functionally, catalyzes the condensation of acetyl-CoA with acetoacetyl-CoA to form 3-hydroxy-3-methylglutaryl-CoA (HMG-CoA). Functions in the mevalonate (MVA) pathway leading to isopentenyl diphosphate (IPP), a key precursor for the biosynthesis of isoprenoid compounds that are building blocks of archaeal membrane lipids. The protein is Hydroxymethylglutaryl-CoA synthase of Picrophilus torridus (strain ATCC 700027 / DSM 9790 / JCM 10055 / NBRC 100828 / KAW 2/3).